Consider the following 404-residue polypeptide: MSGEKRYLTAGLPGTGGTIKETADDFVVEEIPLYLPCGEGEHVYALIEKRGVTTLDAIRRLARALKLSERDVGYAGMKDARGVTRQTVSLPRMKPEEVLALELPGIRILSAERHRNKLKLGHLAGNRFRIRVRGVVSDAVARAEAILAVLERRGVPNRFGEQRYGAQGNSHLIGRAMLAGDWCAAVDLLMGDPAKVTGEAWRSAIEAYQRGELEESQRLFPGHCRTERDVIQRLVKRPDDFEGAFRAVNPRLRKLYLSACQSALFDHVVEARLDSLDTVQEGDLAWKHANGACFLVTDPAAEAPRAEHFEISPTGPLFGCRMMMPEGEEGALERSLLAAEGVEPASFDLPGGLRMEGERRPLRVPLGDPRASADADGLVLEFSLPKGSYATAVLREVMKGGRPD.

The active-site Nucleophile is the aspartate 79. The TRUD domain maps to 154 to 364; sequence GVPNRFGEQR…MEGERRPLRV (211 aa).

This sequence belongs to the pseudouridine synthase TruD family.

The enzyme catalyses uridine(13) in tRNA = pseudouridine(13) in tRNA. In terms of biological role, responsible for synthesis of pseudouridine from uracil-13 in transfer RNAs. The sequence is that of tRNA pseudouridine synthase D from Geobacter metallireducens (strain ATCC 53774 / DSM 7210 / GS-15).